Consider the following 311-residue polypeptide: tRNA-cytidine(32) 2-sulfurtransferase (311 aa).

The PP-loop motif signature appears at 47–52; sequence SGGKDS. The [4Fe-4S] cluster site is built by cysteine 122, cysteine 125, and cysteine 213.

This sequence belongs to the TtcA family. Homodimer. It depends on Mg(2+) as a cofactor. [4Fe-4S] cluster serves as cofactor.

Its subcellular location is the cytoplasm. It carries out the reaction cytidine(32) in tRNA + S-sulfanyl-L-cysteinyl-[cysteine desulfurase] + AH2 + ATP = 2-thiocytidine(32) in tRNA + L-cysteinyl-[cysteine desulfurase] + A + AMP + diphosphate + H(+). It participates in tRNA modification. Catalyzes the ATP-dependent 2-thiolation of cytidine in position 32 of tRNA, to form 2-thiocytidine (s(2)C32). The sulfur atoms are provided by the cysteine/cysteine desulfurase (IscS) system. This is tRNA-cytidine(32) 2-sulfurtransferase from Shigella flexneri serotype 5b (strain 8401).